The chain runs to 204 residues: MEFSHPPVSVSQLGETIALVLGGKAKSVKIALGEITVTVAAADYLAAATLLRDAPGCKFEQLLDLCGLDYSEYKNGQYDGLRYCVSSHLLSVSLNQRVRLKVFCPDDDFPVVDSVNGIWNSANWFEREAFDLYGIVFEGHNDLRRILTDYGFIGHPFRKDFPTTGHVEMRYDAEQKRVIYQPVTIEPREMIPRVIREDNYGGLQ.

The protein belongs to the complex I 30 kDa subunit family. In terms of assembly, NDH-1 is composed of 14 different subunits. Subunits NuoB, C, D, E, F, and G constitute the peripheral sector of the complex.

It localises to the cell inner membrane. The enzyme catalyses a quinone + NADH + 5 H(+)(in) = a quinol + NAD(+) + 4 H(+)(out). NDH-1 shuttles electrons from NADH, via FMN and iron-sulfur (Fe-S) centers, to quinones in the respiratory chain. The immediate electron acceptor for the enzyme in this species is believed to be ubiquinone. Couples the redox reaction to proton translocation (for every two electrons transferred, four hydrogen ions are translocated across the cytoplasmic membrane), and thus conserves the redox energy in a proton gradient. The chain is NADH-quinone oxidoreductase subunit C from Polaromonas naphthalenivorans (strain CJ2).